The sequence spans 268 residues: Probable RNA methyltransferase C2A9.10 (268 aa).

The 236-residue stretch at D23–G258 folds into the Bin3-type SAM domain.

It belongs to the methyltransferase superfamily.

Functionally, probable RNA methyltransferase. In Schizosaccharomyces pombe (strain 972 / ATCC 24843) (Fission yeast), this protein is Probable RNA methyltransferase C2A9.10.